The chain runs to 207 residues: Putative 3-methyladenine DNA glycosylase (207 aa).

It belongs to the DNA glycosylase MPG family.

The protein is Putative 3-methyladenine DNA glycosylase of Listeria welshimeri serovar 6b (strain ATCC 35897 / DSM 20650 / CCUG 15529 / CIP 8149 / NCTC 11857 / SLCC 5334 / V8).